The primary structure comprises 1048 residues: uncharacterized protein (1048 aa).

The interval 601 to 629 (ENQINEEQQTNVENEQQTEQQFENEDKET) is disordered. Positions 605–621 (NEEQQTNVENEQQTEQQ) are enriched in low complexity.

This is an uncharacterized protein from Methanocaldococcus jannaschii (strain ATCC 43067 / DSM 2661 / JAL-1 / JCM 10045 / NBRC 100440) (Methanococcus jannaschii).